A 508-amino-acid polypeptide reads, in one-letter code: RanBP-type and C3HC4-type zinc finger-containing protein 1 (508 aa).

Methionine 1 bears the N-acetylmethionine mark. Positions methionine 1 to arginine 218 are interaction with IRF3. The tract at residues methionine 1–glutamine 268 is interaction with TAB2. At serine 50 the chain carries Phosphoserine. Residues isoleucine 55 to isoleucine 119 enclose the Ubiquitin-like domain. Residues valine 69–leucine 131 form an interaction with RNF31 region. Residues glutamine 163–proline 191 form a disordered region. The RanBP2-type zinc finger occupies proline 188–glutamate 220. A coiled-coil region spans residues aspartate 231–asparagine 259. Residues glutamate 276–cysteine 504 form a TRIAD supradomain region. Cysteine 280, cysteine 283, cysteine 298, histidine 300, cysteine 303, cysteine 306, and cysteine 321 together coordinate Zn(2+). The RING-type 1 zinc-finger motif lies at cysteine 280–cysteine 330. The residue at position 328 (tyrosine 328) is a Phosphotyrosine. Positions 330, 369, 374, 389, 392, 397, 400, 404, 409, 445, and 448 each coordinate Zn(2+). The IBR-type zinc finger occupies glutamine 349–cysteine 409. The segment at cysteine 445 to threonine 474 adopts an RING-type 2; atypical zinc-finger fold. Cysteine 458 is an active-site residue. Zn(2+)-binding residues include cysteine 463 and cysteine 466.

Belongs to the RBR family. As to quaternary structure, component of the LUBAC complex (linear ubiquitin chain assembly complex) which consists of SHARPIN, RBCK1 and RNF31. LUBAC has a MW of approximately 600 kDa suggesting a heteromultimeric assembly of its subunits. Interacts with beta-I-type (PRKCB1) and zeta-type protein kinase C (PRKCZ). Interacts with UBE2L3. Interacts with IREB2 only in iron-rich conditions. Associates with the TNF-R1 signaling complex (TNF-RSC) in a stimulation-dependent manner. Interacts with EYA1, TAB2, TAB3, MAP3K7 TRAF6 and RIPK1. Interacts with IRF3. Auto-ubiquitinated. Auto-ubiquitination leads to degradation by the proteasome. Post-translationally, phosphorylated. In vitro, phosphorylation inhibits auto-ubiquitination activity.

The enzyme catalyses [E2 ubiquitin-conjugating enzyme]-S-ubiquitinyl-L-cysteine + [acceptor protein]-L-lysine = [E2 ubiquitin-conjugating enzyme]-L-cysteine + [acceptor protein]-N(6)-ubiquitinyl-L-lysine.. It functions in the pathway protein modification; protein ubiquitination. E3 ubiquitin-protein ligase, which accepts ubiquitin from specific E2 ubiquitin-conjugating enzymes, such as UBE2L3/UBCM4, and then transfers it to substrates. Functions as an E3 ligase for oxidized IREB2 and both heme and oxygen are necessary for IREB2 ubiquitination. Promotes ubiquitination of TAB2 and IRF3 and their degradation by the proteasome. Component of the LUBAC complex which conjugates linear ('Met-1'-linked) polyubiquitin chains to substrates and plays a key role in NF-kappa-B activation and regulation of inflammation. LUBAC conjugates linear polyubiquitin to IKBKG and RIPK1 and is involved in activation of the canonical NF-kappa-B and the JNK signaling pathways. Linear ubiquitination mediated by the LUBAC complex interferes with TNF-induced cell death and thereby prevents inflammation. LUBAC is recruited to the TNF-R1 signaling complex (TNF-RSC) following polyubiquitination of TNF-RSC components by BIRC2 and/or BIRC3 and to conjugate linear polyubiquitin to IKBKG and possibly other components contributing to the stability of the complex. The LUBAC complex is also involved in innate immunity by conjugating linear polyubiquitin chains at the surface of bacteria invading the cytosol to form the ubiquitin coat surrounding bacteria. LUBAC is not able to initiate formation of the bacterial ubiquitin coat, and can only promote formation of linear polyubiquitins on pre-existing ubiquitin. The bacterial ubiquitin coat acts as an 'eat-me' signal for xenophagy and promotes NF-kappa-B activation. Together with OTULIN, the LUBAC complex regulates the canonical Wnt signaling during angiogenesis. Binds polyubiquitin of different linkage types. In Mus musculus (Mouse), this protein is RanBP-type and C3HC4-type zinc finger-containing protein 1 (Rbck1).